The sequence spans 520 residues: Hydroxymethylglutaryl-CoA synthase, cytoplasmic (520 aa).

S4 carries the phosphoserine modification. The (3S)-3-hydroxy-3-methylglutaryl-CoA site is built by D43 and A44. 44–46 (AGK) contacts CoA. K46 is subject to N6-acetyllysine. The active-site Proton donor/acceptor is the E95. Residues C129, N167, T171, S221, and H264 each contribute to the (3S)-3-hydroxy-3-methylglutaryl-CoA site. The active-site Acyl-thioester intermediate is C129. N167 lines the CoA pocket. S221 lines the CoA pocket. Residue H264 is the Proton donor/acceptor of the active site. 2 residues coordinate CoA: K269 and K273. (3S)-3-hydroxy-3-methylglutaryl-CoA-binding residues include K273, N343, and S377. N6-acetyllysine is present on K273. Residues 488 to 520 (TATEHIPSPAKKVPRLPATSAESESAVISNGEH) are disordered. S495 and S516 each carry phosphoserine. Over residues 507 to 520 (SAESESAVISNGEH) the composition is skewed to polar residues.

It belongs to the thiolase-like superfamily. HMG-CoA synthase family. Homodimer.

The protein localises to the cytoplasm. The enzyme catalyses acetoacetyl-CoA + acetyl-CoA + H2O = (3S)-3-hydroxy-3-methylglutaryl-CoA + CoA + H(+). The protein operates within metabolic intermediate biosynthesis; (R)-mevalonate biosynthesis; (R)-mevalonate from acetyl-CoA: step 2/3. Functionally, catalyzes the condensation of acetyl-CoA with acetoacetyl-CoA to form HMG-CoA, which is converted by HMG-CoA reductase (HMGCR) into mevalonate, a precursor for cholesterol synthesis. In Mus musculus (Mouse), this protein is Hydroxymethylglutaryl-CoA synthase, cytoplasmic.